Reading from the N-terminus, the 321-residue chain is Cytochrome f (321 aa).

A signal peptide spans 1–35 (MQNRKTYDDWVKKWITQSISVLIMIDIMTRTSIAN). Residues tyrosine 37, cysteine 57, cysteine 60, and histidine 61 each contribute to the heme site. The chain crosses the membrane as a helical span at residues 287–307 (VQGLLLFLASVVLAQIFLVLK).

Belongs to the cytochrome f family. The 4 large subunits of the cytochrome b6-f complex are cytochrome b6, subunit IV (17 kDa polypeptide, petD), cytochrome f and the Rieske protein, while the 4 small subunits are PetG, PetL, PetM and PetN. The complex functions as a dimer. The cofactor is heme.

Its subcellular location is the plastid. The protein resides in the chloroplast thylakoid membrane. In terms of biological role, component of the cytochrome b6-f complex, which mediates electron transfer between photosystem II (PSII) and photosystem I (PSI), cyclic electron flow around PSI, and state transitions. The sequence is that of Cytochrome f from Cryptomeria japonica (Japanese cedar).